Reading from the N-terminus, the 874-residue chain is uncharacterized protein (874 aa).

This is an uncharacterized protein from Ostreid herpesvirus 1 (isolate France) (OsHV-1).